The following is a 570-amino-acid chain: Keratin, type I cytoskeletal 10 (570 aa).

The segment covering 1–16 has biased composition (low complexity); it reads MSVLYSSSSKQFSSSR. The segment at 1–29 is disordered; the sequence is MSVLYSSSSKQFSSSRSGGGGGGGSVRVS. Residues 1–143 form a head region; sequence MSVLYSSSSK…GDGGSLLSGN (143 aa). Ser-15 and Ser-17 each carry phosphoserine. Position 32 is an asymmetric dimethylarginine; alternate (Arg-32). The residue at position 32 (Arg-32) is an Omega-N-methylarginine; alternate. Phosphoserine is present on residues Ser-34, Ser-45, Ser-48, and Ser-168. The tract at residues 144-179 is coil 1A; sequence GRVTMQNLNDRLASYMDKVRALEESNYELEGKIKEW. Residues 144–458 enclose the IF rod domain; it reads GRVTMQNLND…SLLEGEGSSS (315 aa). A linker 1 region spans residues 180–200; that stretch reads YEKHGNSSQREPRDYSKYYKT. Residues 201–292 form a coil 1B region; sequence IEDLKGQILT…KNHEEEMRDL (92 aa). Positions 293–315 are linker 12; the sequence is QNVSTGDVNVEMNAAPGVDLTQL. The segment at 316-454 is coil 2; it reads LNNMRNQYEQ…QTYRSLLEGE (139 aa). The disordered stretch occupies residues 451 to 570; sequence LEGEGSSSGG…GDQSSKGPRY (120 aa). The tract at residues 455-570 is tail; the sequence is GSSSGGGGGR…GDQSSKGPRY (116 aa). A compositionally biased stretch (gly residues) spans 456–562; the sequence is SSSGGGGGRR…GGFKSSGGGD (107 aa).

This sequence belongs to the intermediate filament family. In terms of assembly, (Microbial infection) Interacts (via C-terminal tail domain) with the S.aureus clumping factor, clfB; this interaction probably mediates S.aureus attachment to the highly keratinized squamous epithelial cells from the nasal cavity. Heterotetramer of two type I and two type II keratins. Heterodimer with KRT1. Two heterodimers of KRT1 and KRT10 form a heterotetramer. The KRT10 subunit in the heterotetramer is probably disulfide-linked. Interacts with PLEC isoform 1C, when in a heterodimer with KRT1. As to quaternary structure, (Microbial infection) Interacts (via the C-terminal tail domain) with S.pneumoniae serine-rich repeat protein PsrP; this interaction probably mediates S.pneumoniae adherence to lung tissue and subsequent pathogenesis. Expressed in the suprabasal layers of the epidermis throughout the entire sole (at protein level). Expressed in the infundibular regions of the ear, the interscale regions of the tail, and the interfollicular epidermis of the back. Expressed in lung tissue from young mice (at protein level).

It is found in the secreted. The protein resides in the extracellular space. It localises to the cell surface. The protein localises to the cytoplasm. Its function is as follows. Plays a role in the establishment of the epidermal barrier on plantar skin. Involved in the maintenance of cell layer development and keratin filament bundles in suprabasal cells of the epithelium. Functionally, (Microbial infection) Acts as a mediator of S.aureus adherence to desquamated nasal epithelial cells via clfB, and hence may play a role in nasal colonization. In terms of biological role, (Microbial infection) Binds S.pneumoniae PsrP, mediating adherence of the bacteria to lung cell lines. In Mus musculus (Mouse), this protein is Keratin, type I cytoskeletal 10 (Krt10).